A 226-amino-acid chain; its full sequence is Putative type II restriction enzyme MjaVIP (226 aa).

The protein belongs to the BsaWI type II restriction endonuclease family.

The enzyme catalyses Endonucleolytic cleavage of DNA to give specific double-stranded fragments with terminal 5'-phosphates.. Its function is as follows. A P subtype restriction enzyme that recognizes the double-stranded sequence 5'-CCGG-3'; the cleavage site is unknown. In Methanocaldococcus jannaschii (strain ATCC 43067 / DSM 2661 / JAL-1 / JCM 10045 / NBRC 100440) (Methanococcus jannaschii), this protein is Putative type II restriction enzyme MjaVIP (mjaVIRP).